Reading from the N-terminus, the 482-residue chain is Cysteine--tRNA ligase (482 aa).

Position 28 (cysteine 28) interacts with Zn(2+). The short motif at 30 to 40 (PTVYNFLHVGN) is the 'HIGH' region element. Positions 208, 233, and 237 each coordinate Zn(2+). A 'KMSKS' region motif is present at residues 265-269 (KMSKS). Position 268 (lysine 268) interacts with ATP.

This sequence belongs to the class-I aminoacyl-tRNA synthetase family. In terms of assembly, monomer. The cofactor is Zn(2+).

The protein localises to the cytoplasm. The enzyme catalyses tRNA(Cys) + L-cysteine + ATP = L-cysteinyl-tRNA(Cys) + AMP + diphosphate. In Bdellovibrio bacteriovorus (strain ATCC 15356 / DSM 50701 / NCIMB 9529 / HD100), this protein is Cysteine--tRNA ligase.